The sequence spans 494 residues: MARTAFHDEFVDYYTILGAESTSSYVEIRQQYLKLVLRYHPDRNPGREAEVLPQFQLIQKAHEVLKDPKLRELFDQRRLLEAGRPDGVLRFRPKKSGPKNDISTKVASKVSVTMATKFAEKKKKQDRENVDSKDNNITNFSLHRSFSASGKMEKNNSFKEVSTSKSYISSGYLHPKTSPIFKKNGYATENVVDPISSSPRFKGPNYNKFNAKLYLESLREKRRTYTPLSEISNGLNSNGVENSSITKSSPRSSSSSNNERFKDTSEESIIFTSPNTPEHPSVYQTDITPEIKLEHSDNNSPSKPEIPFRHPTSKPLPPKPLSRSKSSSLSRNQTRSQLNDLSAENDSTSNSTEYDDQLQSILRSLAIEGDDDEVAKVLPKPPSVPTIQAPIPPEAPRNLTNASVDSYLNSFEMYQRRWSSYSIIYTQYAFQWQIFKNKCFQLDLMNTPGQSRLIDNWKEGSQAIQLFYAYEQMHLRALEELQSLKESLFASFGI.

The region spanning 12 to 78 (DYYTILGAES…KLRELFDQRR (67 aa)) is the J domain. The span at 229–242 (SEISNGLNSNGVEN) shows a compositional bias: polar residues. Residues 229–354 (SEISNGLNSN…NDSTSNSTEY (126 aa)) are disordered. A compositionally biased stretch (low complexity) spans 243–256 (SSITKSSPRSSSSS). Residues 270-287 (IFTSPNTPEHPSVYQTDI) are compositionally biased toward polar residues. Residues 321–331 (LSRSKSSSLSR) show a composition bias toward low complexity. The segment covering 332 to 354 (NQTRSQLNDLSAENDSTSNSTEY) has biased composition (polar residues).

In terms of assembly, interacts iwth ssa1.

Its subcellular location is the cytoplasm. The protein localises to the cytoskeleton. The protein resides in the nucleus. Its function is as follows. Has a role in the proper organization of the interphase microtubule cytoskeleton. Required for equatorial microtubule organizing center (eMTOC) disassembly into satellites, contributing to the dynamic redistribution of MTOC components for organization of interphase microtubules. The sequence is that of DnaJ-related protein rsp1 (rsp1) from Schizosaccharomyces pombe (strain 972 / ATCC 24843) (Fission yeast).